Here is a 775-residue protein sequence, read N- to C-terminus: Dipeptidyl peptidase 4 (775 aa).

The N-terminal stretch at 1–15 is a signal peptide; that stretch reads MKFLSLLLLVGVAQA. Asn81, Asn111, and Asn219 each carry an N-linked (GlcNAc...) asparagine glycan. Active-site charge relay system residues include Ser613, Asp690, and His725. Asn731 carries N-linked (GlcNAc...) asparagine glycosylation.

The protein belongs to the peptidase S9B family.

It is found in the secreted. The enzyme catalyses Release of an N-terminal dipeptide, Xaa-Yaa-|-Zaa-, from a polypeptide, preferentially when Yaa is Pro, provided Zaa is neither Pro nor hydroxyproline.. Its function is as follows. Extracellular dipeptidyl-peptidase which removes N-terminal dipeptides sequentially from polypeptides having unsubstituted N-termini provided that the penultimate residue is proline. Contributes to pathogenicity. The chain is Dipeptidyl peptidase 4 (DPP4) from Arthroderma otae (strain ATCC MYA-4605 / CBS 113480) (Microsporum canis).